Consider the following 37-residue polypeptide: Large ribosomal subunit protein bL36c (37 aa).

The protein belongs to the bacterial ribosomal protein bL36 family.

The protein localises to the plastid. The protein resides in the chloroplast. The chain is Large ribosomal subunit protein bL36c from Gnetum parvifolium (Small-leaved jointfir).